A 63-amino-acid polypeptide reads, in one-letter code: Metallothionein-2 (63 aa).

It belongs to the metallothionein superfamily. Type 6 family.

Functionally, this protein binds cations of several transition elements. The chain is Metallothionein-2 (mtl-2) from Caenorhabditis elegans.